The following is a 367-amino-acid chain: Voltage-gated potassium channel subunit beta-2 (367 aa).

Positions 56, 57, 63, and 85 each coordinate NADP(+). Catalysis depends on Tyr-90, which acts as the Proton donor/acceptor. Asn-158, Ser-188, Arg-189, Gln-214, Trp-243, Ser-244, Pro-245, Leu-246, Ala-247, Cys-248, Lys-254, Tyr-262, Arg-264, Gly-323, Ser-325, Gln-329, Glu-332, and Asn-333 together coordinate NADP(+).

Belongs to the shaker potassium channel beta subunit family. Forms heteromultimeric complex with alpha subunits.

It is found in the cytoplasm. The protein resides in the membrane. Its subcellular location is the cell membrane. It localises to the cell projection. The protein localises to the axon. It is found in the synapse. The protein resides in the synaptosome. Its subcellular location is the cytoskeleton. Functionally, regulatory subunit of the voltage-gated potassium (Kv) Shaker channels composed of pore-forming and potassium-conducting alpha subunits and of regulatory beta subunits. The beta-2/KCNAB2 cytoplasmic subunit may promote potassium channel closure via a mechanism that does not involve physical obstruction of the channel pore. Enhances current amplitude of Kv1.1/KCNA1 and Kv2.2/KCNA2 channels. May display nicotinamide adenine dinucleotide phosphate (NADPH)-dependent aldoketoreductase activity by catalyzing the NADPH-dependent reduction of a wide range of aldehyde and ketone substrates. The binding of oxidized and reduced nucleotide may alter Kv channel gating and contribute to dynamic fine tuning of cell excitability. The polypeptide is Voltage-gated potassium channel subunit beta-2 (kcnab2) (Xenopus laevis (African clawed frog)).